The chain runs to 237 residues: Uridylate kinase (237 aa).

12 to 15 (KLSG) is a binding site for ATP. Glycine 53 serves as a coordination point for UMP. The ATP site is built by glycine 54 and arginine 58. Residues aspartate 73 and 134-141 (TGNPYFTT) each bind UMP. ATP-binding residues include threonine 161, tyrosine 167, and aspartate 170.

It belongs to the UMP kinase family. As to quaternary structure, homohexamer.

It localises to the cytoplasm. The enzyme catalyses UMP + ATP = UDP + ADP. Its pathway is pyrimidine metabolism; CTP biosynthesis via de novo pathway; UDP from UMP (UMPK route): step 1/1. Inhibited by UTP. Its function is as follows. Catalyzes the reversible phosphorylation of UMP to UDP. The protein is Uridylate kinase of Rhizorhabdus wittichii (strain DSM 6014 / CCUG 31198 / JCM 15750 / NBRC 105917 / EY 4224 / RW1) (Sphingomonas wittichii).